Consider the following 190-residue polypeptide: Dynactin subunit 6 (190 aa).

A Phosphothreonine; by CDK1 modification is found at Thr-186.

The protein belongs to the dynactin subunits 5/6 family. Dynactin subunit 6 subfamily. Subunit of dynactin, a multiprotein complex part of a tripartite complex with dynein and a adapter, such as BICDL1, BICD2 or HOOK3. The dynactin complex is built around ACTR1A/ACTB filament and consists of an actin-related filament composed of a shoulder domain, a pointed end and a barbed end. Its length is defined by its flexible shoulder domain. The soulder is composed of 2 DCTN1 subunits, 4 DCTN2 and 2 DCTN3. The 4 DCNT2 (via N-terminus) bind the ACTR1A filament and act as molecular rulers to determine the length. The pointed end is important for binding dynein-dynactin cargo adapters. Consists of 4 subunits: ACTR10, DCNT4, DCTN5 and DCTN6. Within the complex DCTN6 forms a heterodimer with DCTN5. The barbed end is composed of a CAPZA1:CAPZB heterodimers, which binds ACTR1A/ACTB filament and dynactin and stabilizes dynactin. Interacts with PLK1. Interacts with N4BP2L1. Phosphorylation at Thr-186 by CDK1 during mitotic prometaphase creates a binding site for PLK1 that facilitates its recruitment to kinetochores. Ubiquitous.

The protein localises to the cytoplasm. The protein resides in the cytoskeleton. It localises to the chromosome. Its subcellular location is the centromere. It is found in the kinetochore. Functionally, part of the dynactin complex that activates the molecular motor dynein for ultra-processive transport along microtubules. This is Dynactin subunit 6 from Homo sapiens (Human).